We begin with the raw amino-acid sequence, 408 residues long: Probable ethanolamine permease EutH (408 aa).

The next 11 helical transmembrane spans lie at 1 to 21 (MGIN…AAVD), 61 to 81 (AMVG…PVII), 89 to 109 (ANPS…FFLA), 126 to 146 (ILGS…LGII), 155 to 175 (ALGV…GGLI), 192 to 212 (FALI…VALG), 230 to 250 (FLVA…LLGW), 274 to 294 (IEVI…VLLL), 313 to 333 (NIAA…FGMM), 342 to 362 (VINC…LGFA), and 369 to 389 (MIFP…GVAM).

The protein belongs to the EutH family.

The protein resides in the cell inner membrane. It carries out the reaction ethanolamine(in) = ethanolamine(out). Its pathway is amine and polyamine degradation; ethanolamine degradation. Functionally, probably involved in the diffusion of protonated ethanolamine (EA) into the cell at low pH. At low pH most EA is protonated, and this permease becomes necessary. Contributes to bacterial survival and replication in acidified macrophage vacuoles, but not to bacterial uptake by macrophages. Expression of the eut operon allows this bacteria to use ethanolamine (EA) as a carbon, nitrogen and energy source. It relies on cobalamin (vitamin B12) both as a cofactor for the ethanolamine ammonia-lyase (EAL) activity and to induce the operon. EA enhances bacterial survival in macrophages in a concentration-dependent manner, suggesting it is an important nutrient during infection. This Salmonella typhimurium (strain LT2 / SGSC1412 / ATCC 700720) protein is Probable ethanolamine permease EutH.